A 293-amino-acid polypeptide reads, in one-letter code: Ribosomal protein L11 methyltransferase (293 aa).

S-adenosyl-L-methionine-binding residues include T145, G166, D188, and N230.

The protein belongs to the methyltransferase superfamily. PrmA family.

It is found in the cytoplasm. The enzyme catalyses L-lysyl-[protein] + 3 S-adenosyl-L-methionine = N(6),N(6),N(6)-trimethyl-L-lysyl-[protein] + 3 S-adenosyl-L-homocysteine + 3 H(+). Its function is as follows. Methylates ribosomal protein L11. The polypeptide is Ribosomal protein L11 methyltransferase (Shewanella piezotolerans (strain WP3 / JCM 13877)).